Reading from the N-terminus, the 299-residue chain is Taste receptor type 2 member 16 (299 aa).

The Extracellular portion of the chain corresponds to 1–5; it reads MVPTQ. The chain crosses the membrane as a helical span at residues 6 to 26; that stretch reads VTIFSIIMYVLESLVIIVQSC. Over 27–47 the chain is Cytoplasmic; the sequence is TTVAVLFREWMHFQRLSPVET. The chain crosses the membrane as a helical span at residues 48-68; sequence ILISLGISHFCLQWTSMLYNF. Residues 69–82 are Extracellular-facing; sequence GTYSRPVLLFWKVS. A helical transmembrane segment spans residues 83 to 103; sequence VVWEFMNILTFWLTSWLAVLY. Residues 104-125 are Cytoplasmic-facing; that stretch reads CVKVSSFTHPIFLWLRMKILKL. Residues 126-146 traverse the membrane as a helical segment; sequence VLWLILGALIASCLSIIPSVV. At 147–183 the chain is on the extracellular side; it reads KYHIQMELVTLDNLPKNNSLILRLQQFEWYFSNPLKM. N163 carries N-linked (GlcNAc...) asparagine glycosylation. The helical transmembrane segment at 184–204 threads the bilayer; that stretch reads IGFGIPFFVFLASIILLTVSL. The Cytoplasmic segment spans residues 205 to 233; that stretch reads VQHWVQMKHYSSSNSSLKAQFTVLKSLAT. A helical membrane pass occupies residues 234–254; that stretch reads FFTFFTSYFLTIVISFIGTVF. The Extracellular portion of the chain corresponds to 255-258; sequence DKKS. The chain crosses the membrane as a helical span at residues 259–279; sequence WFWVCEAVIYGLVCIHFTSLM. Over 280-299 the chain is Cytoplasmic; sequence MSNPALKKALKLQFWSPEPS.

This sequence belongs to the G-protein coupled receptor T2R family. In terms of assembly, interacts with RTP3 and RTP4.

Its subcellular location is the cell membrane. In terms of biological role, gustducin-coupled receptor implicated in the perception of bitter compounds in the oral cavity and the gastrointestinal tract. Signals through PLCB2 and the calcium-regulated cation channel TRPM5. The sequence is that of Taste receptor type 2 member 16 (Tas2r16) from Mus musculus (Mouse).